The following is a 217-amino-acid chain: Orotidine 5'-phosphate decarboxylase (217 aa).

Residues D14, K36, 64-73, S120, 172-182, G197, and R198 each bind substrate; these read DFKVADIPST and PGVGAQGGNLS. Catalysis depends on K66, which acts as the Proton donor.

Belongs to the OMP decarboxylase family. Type 1 subfamily. Homodimer.

It carries out the reaction orotidine 5'-phosphate + H(+) = UMP + CO2. Its pathway is pyrimidine metabolism; UMP biosynthesis via de novo pathway; UMP from orotate: step 2/2. Its function is as follows. Catalyzes the decarboxylation of orotidine 5'-monophosphate (OMP) to uridine 5'-monophosphate (UMP). This Methanococcus maripaludis (strain C6 / ATCC BAA-1332) protein is Orotidine 5'-phosphate decarboxylase.